The primary structure comprises 430 residues: Serine hydroxymethyltransferase (430 aa).

Residue 120-122 (GHI) coordinates (6S)-5,6,7,8-tetrahydrofolate. The residue at position 226 (Lys226) is an N6-(pyridoxal phosphate)lysine.

Belongs to the SHMT family. As to quaternary structure, homodimer. It depends on pyridoxal 5'-phosphate as a cofactor.

It is found in the cytoplasm. Its pathway is amino-acid biosynthesis; glycine biosynthesis; glycine from L-serine: step 1/1. In terms of biological role, catalyzes the reversible interconversion of serine and glycine with a modified folate serving as the one-carbon carrier. Also exhibits a pteridine-independent aldolase activity toward beta-hydroxyamino acids, producing glycine and aldehydes, via a retro-aldol mechanism. The chain is Serine hydroxymethyltransferase from Pyrobaculum calidifontis (strain DSM 21063 / JCM 11548 / VA1).